Consider the following 865-residue polypeptide: Alanine--tRNA ligase (865 aa).

His554, His558, Cys656, and His660 together coordinate Zn(2+).

This sequence belongs to the class-II aminoacyl-tRNA synthetase family. Requires Zn(2+) as cofactor.

The protein resides in the cytoplasm. It catalyses the reaction tRNA(Ala) + L-alanine + ATP = L-alanyl-tRNA(Ala) + AMP + diphosphate. Its function is as follows. Catalyzes the attachment of alanine to tRNA(Ala) in a two-step reaction: alanine is first activated by ATP to form Ala-AMP and then transferred to the acceptor end of tRNA(Ala). Also edits incorrectly charged Ser-tRNA(Ala) and Gly-tRNA(Ala) via its editing domain. This is Alanine--tRNA ligase from Idiomarina loihiensis (strain ATCC BAA-735 / DSM 15497 / L2-TR).